The primary structure comprises 428 residues: Enolase (428 aa).

Gln-162 is a (2R)-2-phosphoglycerate binding site. The Proton donor role is filled by Glu-204. The Mg(2+) site is built by Asp-241, Glu-283, and Asp-310. The (2R)-2-phosphoglycerate site is built by Lys-335, Arg-364, Ser-365, and Lys-386. The active-site Proton acceptor is Lys-335.

This sequence belongs to the enolase family. Mg(2+) is required as a cofactor.

The protein localises to the cytoplasm. Its subcellular location is the secreted. The protein resides in the cell surface. It catalyses the reaction (2R)-2-phosphoglycerate = phosphoenolpyruvate + H2O. It functions in the pathway carbohydrate degradation; glycolysis; pyruvate from D-glyceraldehyde 3-phosphate: step 4/5. Catalyzes the reversible conversion of 2-phosphoglycerate (2-PG) into phosphoenolpyruvate (PEP). It is essential for the degradation of carbohydrates via glycolysis. The protein is Enolase of Nocardia farcinica (strain IFM 10152).